The chain runs to 250 residues: ATP synthase subunit a (250 aa).

Transmembrane regions (helical) follow at residues 27-47 (TDTVLSTAIAALIVLALAFYL), 83-103 (IAPFVLPLAVTIFVFILISNW), 129-149 (INYVLALALFVFVCYHAAGIW), 191-211 (IFAGSILVALIALFPPYIMWA), and 219-239 (FDLFVGAIQAFIFALLTILYF).

It belongs to the ATPase A chain family. As to quaternary structure, F-type ATPases have 2 components, CF(1) - the catalytic core - and CF(0) - the membrane proton channel. CF(1) has five subunits: alpha(3), beta(3), gamma(1), delta(1), epsilon(1). CF(0) has three main subunits: a(1), b(2) and c(9-12). The alpha and beta chains form an alternating ring which encloses part of the gamma chain. CF(1) is attached to CF(0) by a central stalk formed by the gamma and epsilon chains, while a peripheral stalk is formed by the delta and b chains.

Its subcellular location is the cell membrane. Functionally, key component of the proton channel; it plays a direct role in the translocation of protons across the membrane. The sequence is that of ATP synthase subunit a from Mycobacterium ulcerans (strain Agy99).